The following is a 120-amino-acid chain: U13-lycotoxin-Ls1a (120 aa).

Residues 1–16 form the signal peptide; it reads MKILFVLISILYAVYC. The propeptide occupies 17–54; sequence FSSEEDVDSAYLANELEPVEDINSEQYAALEPKEEQER. Intrachain disulfides connect Cys56–Cys70, Cys63–Cys76, Cys69–Cys87, and Cys78–Cys85. The Agouti domain occupies 56–95; the sequence is CADMGQDCKDDCDCCLNIATCNCWFGRYFCSCTFGDYQTC.

It belongs to the neurotoxin 05 (agouti) family. Post-translationally, contains 6 disulfide bonds. As to expression, expressed by the venom gland.

The protein resides in the secreted. In Lycosa singoriensis (Wolf spider), this protein is U13-lycotoxin-Ls1a.